The primary structure comprises 231 residues: 2-C-methyl-D-erythritol 4-phosphate cytidylyltransferase (231 aa).

Belongs to the IspD/TarI cytidylyltransferase family. IspD subfamily.

The enzyme catalyses 2-C-methyl-D-erythritol 4-phosphate + CTP + H(+) = 4-CDP-2-C-methyl-D-erythritol + diphosphate. It functions in the pathway isoprenoid biosynthesis; isopentenyl diphosphate biosynthesis via DXP pathway; isopentenyl diphosphate from 1-deoxy-D-xylulose 5-phosphate: step 2/6. Catalyzes the formation of 4-diphosphocytidyl-2-C-methyl-D-erythritol from CTP and 2-C-methyl-D-erythritol 4-phosphate (MEP). The polypeptide is 2-C-methyl-D-erythritol 4-phosphate cytidylyltransferase (Shewanella pealeana (strain ATCC 700345 / ANG-SQ1)).